Here is an 85-residue protein sequence, read N- to C-terminus: UPF0386 protein RHE_CH01859 (85 aa).

This sequence belongs to the UPF0386 family.

The sequence is that of UPF0386 protein RHE_CH01859 from Rhizobium etli (strain ATCC 51251 / DSM 11541 / JCM 21823 / NBRC 15573 / CFN 42).